A 361-amino-acid chain; its full sequence is tRNA/tmRNA (uracil-C(5))-methyltransferase (361 aa).

S-adenosyl-L-methionine-binding residues include Gln183, Tyr211, Asn216, Glu232, and Asp294. Cys319 acts as the Nucleophile in catalysis. Glu353 acts as the Proton acceptor in catalysis.

The protein belongs to the class I-like SAM-binding methyltransferase superfamily. RNA M5U methyltransferase family. TrmA subfamily.

The catalysed reaction is uridine(54) in tRNA + S-adenosyl-L-methionine = 5-methyluridine(54) in tRNA + S-adenosyl-L-homocysteine + H(+). The enzyme catalyses uridine(341) in tmRNA + S-adenosyl-L-methionine = 5-methyluridine(341) in tmRNA + S-adenosyl-L-homocysteine + H(+). In terms of biological role, dual-specificity methyltransferase that catalyzes the formation of 5-methyluridine at position 54 (m5U54) in all tRNAs, and that of position 341 (m5U341) in tmRNA (transfer-mRNA). This is tRNA/tmRNA (uracil-C(5))-methyltransferase from Acinetobacter baylyi (strain ATCC 33305 / BD413 / ADP1).